We begin with the raw amino-acid sequence, 245 residues long: 14-3-3 protein theta (245 aa).

Met-1 carries the N-acetylmethionine modification. An N6-acetyllysine modification is found at Lys-3. Position 49 is an N6-acetyllysine; alternate (Lys-49). A Glycyl lysine isopeptide (Lys-Gly) (interchain with G-Cter in SUMO2); alternate cross-link involves residue Lys-49. Position 68 is an N6-acetyllysine (Lys-68). At Tyr-82 the chain carries 3'-nitrotyrosine. Ser-92 carries the phosphoserine modification. Position 104 is a 3'-nitrotyrosine (Tyr-104). An N6-acetyllysine modification is found at Lys-115. Residue Ser-232 is modified to Phosphoserine; by CK1.

This sequence belongs to the 14-3-3 family. As to quaternary structure, homodimer. Interacts with CDKN1B ('Thr-198' phosphorylated form); the interaction translocates CDKN1B to the cytoplasm. Interacts with SSH1. Interacts with GAB2. Interacts with RGS7 (phosphorylated form). Interacts with CDK16. Interacts with the 'Ser-241' phosphorylated form of PDPK1. Interacts with the 'Thr-369' phosphorylated form of DAPK2. Interacts with PI4KB, TBC1D22A and TBC1D22B. Interacts with SLITRK1. Interacts with RIPOR2. Interacts with INAVA; the interaction increases upon PRR (pattern recognition receptor) stimulation and is required for cellular signaling pathway activation and cytokine secretion. Interacts with MARK2, MARK3 and MARK4. Interacts with MEFV.

Its subcellular location is the cytoplasm. In terms of biological role, adapter protein implicated in the regulation of a large spectrum of both general and specialized signaling pathways. Binds to a large number of partners, usually by recognition of a phosphoserine or phosphothreonine motif. Binding generally results in the modulation of the activity of the binding partner. Negatively regulates the kinase activity of PDPK1. The chain is 14-3-3 protein theta (Ywhaq) from Mus musculus (Mouse).